We begin with the raw amino-acid sequence, 334 residues long: Glycerol-3-phosphate dehydrogenase [NAD(P)+] (334 aa).

4 residues coordinate NADPH: S11, W12, R32, and K106. Sn-glycerol 3-phosphate contacts are provided by K106 and G136. A140 provides a ligand contact to NADPH. Sn-glycerol 3-phosphate-binding residues include K191, D244, S254, R255, and N256. Catalysis depends on K191, which acts as the Proton acceptor. R255 contacts NADPH. NADPH contacts are provided by V279 and E281.

This sequence belongs to the NAD-dependent glycerol-3-phosphate dehydrogenase family.

Its subcellular location is the cytoplasm. The enzyme catalyses sn-glycerol 3-phosphate + NAD(+) = dihydroxyacetone phosphate + NADH + H(+). It carries out the reaction sn-glycerol 3-phosphate + NADP(+) = dihydroxyacetone phosphate + NADPH + H(+). Its pathway is membrane lipid metabolism; glycerophospholipid metabolism. In terms of biological role, catalyzes the reduction of the glycolytic intermediate dihydroxyacetone phosphate (DHAP) to sn-glycerol 3-phosphate (G3P), the key precursor for phospholipid synthesis. This Parafrankia sp. (strain EAN1pec) protein is Glycerol-3-phosphate dehydrogenase [NAD(P)+].